The primary structure comprises 550 residues: Ribosomal protein S6 kinase beta (550 aa).

Residues 83-344 (FQLLKVLGKG…AEEIKSHAFF (262 aa)) enclose the Protein kinase domain. Residues 89–97 (LGKGGYGKV) and Lys115 each bind ATP. Residue Asp210 is the Proton acceptor of the active site. Residues 345 to 415 (KTTDWNLVYA…VAPSVLEMMN (71 aa)) enclose the AGC-kinase C-terminal domain. Thr404 bears the Phosphothreonine mark. 2 disordered regions span residues 433–466 (RAGA…GPNS) and 484–550 (TAGG…KRVM). Ser439 is modified (phosphoserine). A compositionally biased stretch (low complexity) spans 520–534 (TTTGNGSTTTTRPSN).

This sequence belongs to the protein kinase superfamily. AGC Ser/Thr protein kinase family. S6 kinase subfamily. It depends on Mg(2+) as a cofactor. Post-translationally, may be phosphorylated on Thr-404 by let-363/TOR.

The protein resides in the cell projection. Its subcellular location is the axon. It is found in the perikaryon. The catalysed reaction is L-seryl-[protein] + ATP = O-phospho-L-seryl-[protein] + ADP + H(+). It catalyses the reaction L-threonyl-[protein] + ATP = O-phospho-L-threonyl-[protein] + ADP + H(+). In terms of biological role, serine/threonine-protein kinase which regulates mRNA translation. Negatively regulates lifespan and resistance to starvation, oxidative stress, protein aggregation and P.aeruginosa-mediated infection. May regulate these processes by preventing the activation of transcription factor hif-1. Required, probably downstream of let-363/TOR, for the establishment of the proper number of germline progenitors by promoting cell cycle progression and preventing differentiation during larval development. Regulates germ cell size. In addition required for sperm production and embryo viability. Involved in axon regeneration of PLM and ALM neurons by inhibiting growth cone formation early after axotomy and later by inhibiting axon extension. Functions in axon regeneration and lifespan probably by preventing aak-2/AMPK activation. Negatively regulates autophagy. The sequence is that of Ribosomal protein S6 kinase beta from Caenorhabditis elegans.